We begin with the raw amino-acid sequence, 329 residues long: Malate dehydrogenase (329 aa).

12–18 contributes to the NAD(+) binding site; that stretch reads GAAGQIG. Residues Arg-93 and Arg-99 each contribute to the substrate site. NAD(+) is bound by residues Asn-106, Gln-113, and 130 to 132; that span reads VGN. Residues Asn-132 and Arg-163 each coordinate substrate. Residue His-188 is the Proton acceptor of the active site.

It belongs to the LDH/MDH superfamily. MDH type 2 family.

The catalysed reaction is (S)-malate + NAD(+) = oxaloacetate + NADH + H(+). Its function is as follows. Catalyzes the reversible oxidation of malate to oxaloacetate. The protein is Malate dehydrogenase of Frankia alni (strain DSM 45986 / CECT 9034 / ACN14a).